A 336-amino-acid polypeptide reads, in one-letter code: MTTMLEVAKRAGVSKATVSRVLSGNGYVSQETKDRVFQAVEESGYRPNLLARNLSAKSTQTLGLVVTNTLYHGIYFSELLFHAARMAEEKGRQLLLADGKHSAEEERQAIQYLLDLRCDAIMIYPRFLSVDEIDDIIDAHSQPIMVLNRRLRKNSSHSVWCDHKQTSFNAVAELINAGHQEIAFLTGSMDSPTSIERLAGYKDALAQHGIALNEKLIANGKWTPASGAEGVEMLLERGAKFSALVASNDDMAIGAMKALHERGVAVPEQVSVIGFDDIAIAPYTVPALSSVKIPVTEMIQEIIGRLIFMLDGGDFSPPKTFSGKLIRRDSLIAPSR.

The HTH lacI-type domain occupies 2–56 (TTMLEVAKRAGVSKATVSRVLSGNGYVSQETKDRVFQAVEESGYRPNLLARNLSA). Residues 4–23 (MLEVAKRAGVSKATVSRVLS) constitute a DNA-binding region (H-T-H motif).

Functionally, repressor of the asc operon. The cryptic operon is activated by the insertion of IS186 into the ascG gene. This chain is HTH-type transcriptional regulator AscG (ascG), found in Escherichia coli (strain K12).